A 347-amino-acid chain; its full sequence is Ferredoxin--NADP reductase 1 (347 aa).

FAD contacts are provided by T26, D45, Q53, Y58, V98, F133, D298, and S339.

This sequence belongs to the ferredoxin--NADP reductase type 2 family. Homodimer. The cofactor is FAD.

The enzyme catalyses 2 reduced [2Fe-2S]-[ferredoxin] + NADP(+) + H(+) = 2 oxidized [2Fe-2S]-[ferredoxin] + NADPH. The polypeptide is Ferredoxin--NADP reductase 1 (Chloroherpeton thalassium (strain ATCC 35110 / GB-78)).